The following is a 270-amino-acid chain: Energy-coupling factor transporter ATP-binding protein EcfA (270 aa).

One can recognise an ABC transporter domain in the interval 5–238; it reads VEIENLTFFY…QLLEQNGLKA (234 aa). 38-45 serves as a coordination point for ATP; that stretch reads GHNGAGKS.

The protein belongs to the ABC transporter superfamily. Energy-coupling factor EcfA family. As to quaternary structure, forms a stable energy-coupling factor (ECF) transporter complex composed of 2 membrane-embedded substrate-binding proteins (S component), 2 ATP-binding proteins (A component) and 2 transmembrane proteins (T component).

The protein resides in the cell membrane. Its function is as follows. ATP-binding (A) component of a common energy-coupling factor (ECF) ABC-transporter complex. Unlike classic ABC transporters this ECF transporter provides the energy necessary to transport a number of different substrates. The chain is Energy-coupling factor transporter ATP-binding protein EcfA from Carboxydothermus hydrogenoformans (strain ATCC BAA-161 / DSM 6008 / Z-2901).